The chain runs to 191 residues: Small ribosomal subunit protein uS5 (191 aa).

Positions 21-84 (LVDKLVTINR…ERAKRTMIRV (64 aa)) constitute an S5 DRBM domain. The tract at residues 161–191 (PRHVASRRGKKAAELFGKREQGQTEAEVTNG) is disordered. Residues 171-182 (KAAELFGKREQG) are compositionally biased toward basic and acidic residues.

Belongs to the universal ribosomal protein uS5 family. In terms of assembly, part of the 30S ribosomal subunit. Contacts proteins S4 and S8.

Its function is as follows. With S4 and S12 plays an important role in translational accuracy. Located at the back of the 30S subunit body where it stabilizes the conformation of the head with respect to the body. In Gluconobacter oxydans (strain 621H) (Gluconobacter suboxydans), this protein is Small ribosomal subunit protein uS5.